A 474-amino-acid polypeptide reads, in one-letter code: tRNA-2-methylthio-N(6)-dimethylallyladenosine synthase (474 aa).

Residues 3–120 (KKLLIKTWGC…LPEMIKQSQS (118 aa)) form the MTTase N-terminal domain. The [4Fe-4S] cluster site is built by cysteine 12, cysteine 49, cysteine 83, cysteine 157, cysteine 161, and cysteine 164. The region spanning 143 to 375 (RAEGATAFVS…QQTVNTQAMR (233 aa)) is the Radical SAM core domain. In terms of domain architecture, TRAM spans 378-441 (RQMLDTEQRV…ANSLRGELVR (64 aa)).

This sequence belongs to the methylthiotransferase family. MiaB subfamily. Monomer. [4Fe-4S] cluster serves as cofactor.

Its subcellular location is the cytoplasm. The catalysed reaction is N(6)-dimethylallyladenosine(37) in tRNA + (sulfur carrier)-SH + AH2 + 2 S-adenosyl-L-methionine = 2-methylsulfanyl-N(6)-dimethylallyladenosine(37) in tRNA + (sulfur carrier)-H + 5'-deoxyadenosine + L-methionine + A + S-adenosyl-L-homocysteine + 2 H(+). Catalyzes the methylthiolation of N6-(dimethylallyl)adenosine (i(6)A), leading to the formation of 2-methylthio-N6-(dimethylallyl)adenosine (ms(2)i(6)A) at position 37 in tRNAs that read codons beginning with uridine. The polypeptide is tRNA-2-methylthio-N(6)-dimethylallyladenosine synthase (Vibrio campbellii (strain ATCC BAA-1116)).